A 198-amino-acid polypeptide reads, in one-letter code: Na(+)-translocating NADH-quinone reductase subunit E (198 aa).

6 consecutive transmembrane segments (helical) span residues 11-31, 35-55, 77-97, 110-130, 140-160, and 176-196; these read AVFI…FLAV, VSTA…AVPV, FLNF…LEMV, GIFL…SFMV, IVYG…LAGL, and LGIT…FSGI.

The protein belongs to the NqrDE/RnfAE family. In terms of assembly, composed of six subunits; NqrA, NqrB, NqrC, NqrD, NqrE and NqrF.

It localises to the cell inner membrane. It carries out the reaction a ubiquinone + n Na(+)(in) + NADH + H(+) = a ubiquinol + n Na(+)(out) + NAD(+). Its function is as follows. NQR complex catalyzes the reduction of ubiquinone-1 to ubiquinol by two successive reactions, coupled with the transport of Na(+) ions from the cytoplasm to the periplasm. NqrA to NqrE are probably involved in the second step, the conversion of ubisemiquinone to ubiquinol. In Haemophilus influenzae (strain 86-028NP), this protein is Na(+)-translocating NADH-quinone reductase subunit E.